The primary structure comprises 207 residues: Heat shock protein beta-1 (207 aa).

Omega-N-methylarginine is present on Arg-12. Ser-13 bears the Phosphoserine mark. Phosphoserine; by MAPKAPK2 and MAPKAPK3 is present on Ser-15. Ser-27 is subject to Phosphoserine. Residues 72-207 form an interaction with TGFB1I1 region; the sequence is APAYSRLLSR…AGKSEKPGTK (136 aa). The sHSP domain maps to 78–186; it reads LLSRQLSSGV…QSAEITIPVT (109 aa). Ser-80 and Ser-84 each carry phosphoserine; by MAPKAPK2, MAPKAPK3 and MAPKAPK5. Phosphoserine occurs at positions 85, 88, and 100. Residue Lys-125 is modified to N6-acetyllysine. Positions 151–181 are disordered; that stretch reads DPTQVSSSLSPEGTLSVEAPLPKPATQSAEI. Polar residues predominate over residues 153-163; that stretch reads TQVSSSLSPEG. Phosphothreonine is present on Thr-176. A phosphoserine mark is found at Ser-178 and Ser-201.

The protein belongs to the small heat shock protein (HSP20) family. Homooligomer. Homodimer; becomes monomeric upon activation. Heterooligomer; with HSPB6. Associates with alpha- and beta-tubulin. Interacts with TGFB1I1. Interacts with CRYAB. Interacts with HSPB8. Interacts with HSPBAP1. Phosphorylated upon exposure to protein kinase C activators and heat shock. Phosphorylation by MAPKAPK2 and MAPKAPK3 in response to stress dissociates HSPB1 from large small heat-shock protein (sHsps) oligomers and impairs its chaperone activity and ability to protect against oxidative stress effectively. Phosphorylation by MAPKAPK5 in response to PKA stimulation induces F-actin rearrangement.

The protein localises to the cytoplasm. The protein resides in the nucleus. It localises to the cytoskeleton. Its subcellular location is the spindle. Functionally, small heat shock protein which functions as a molecular chaperone probably maintaining denatured proteins in a folding-competent state. Plays a role in stress resistance and actin organization. Through its molecular chaperone activity may regulate numerous biological processes including the phosphorylation and the axonal transport of neurofilament proteins. The protein is Heat shock protein beta-1 (HSPB1) of Sus scrofa (Pig).